The following is a 62-amino-acid chain: Photosystem II reaction center protein Z (62 aa).

2 helical membrane passes run 8–28 and 41–61; these read ALAALVILSFAMIVGVPVAYA and FLGSGVWIGLVLVVAALNFLV.

It belongs to the PsbZ family. As to quaternary structure, PSII is composed of 1 copy each of membrane proteins PsbA, PsbB, PsbC, PsbD, PsbE, PsbF, PsbH, PsbI, PsbJ, PsbK, PsbL, PsbM, PsbT, PsbX, PsbY, PsbZ, Psb30/Ycf12, peripheral proteins PsbO, CyanoQ (PsbQ), PsbU, PsbV and a large number of cofactors. It forms dimeric complexes.

Its subcellular location is the cellular thylakoid membrane. Its function is as follows. May control the interaction of photosystem II (PSII) cores with the light-harvesting antenna, regulates electron flow through the 2 photosystem reaction centers. PSII is a light-driven water plastoquinone oxidoreductase, using light energy to abstract electrons from H(2)O, generating a proton gradient subsequently used for ATP formation. The polypeptide is Photosystem II reaction center protein Z (Cyanothece sp. (strain PCC 7425 / ATCC 29141)).